Consider the following 190-residue polypeptide: Putative manganese efflux pump MntP (190 aa).

The next 6 membrane-spanning stretches (helical) occupy residues 6 to 26 (IWLL…TSGI), 36 to 56 (FFIM…IGWF), 61 to 81 (FSHL…AFWG), 108 to 128 (LAIA…FVGI), 138 to 158 (IVII…IGVF), and 169 to 189 (LWGG…HLFL).

Belongs to the MntP (TC 9.B.29) family.

It localises to the cell inner membrane. In terms of biological role, probably functions as a manganese efflux pump. The chain is Putative manganese efflux pump MntP from Phocaeicola vulgatus (strain ATCC 8482 / DSM 1447 / JCM 5826 / CCUG 4940 / NBRC 14291 / NCTC 11154) (Bacteroides vulgatus).